A 532-amino-acid chain; its full sequence is Glutamate--cysteine ligase (532 aa).

It belongs to the glutamate--cysteine ligase type 1 family. Type 1 subfamily.

It carries out the reaction L-cysteine + L-glutamate + ATP = gamma-L-glutamyl-L-cysteine + ADP + phosphate + H(+). It functions in the pathway sulfur metabolism; glutathione biosynthesis; glutathione from L-cysteine and L-glutamate: step 1/2. This is Glutamate--cysteine ligase from Pseudomonas fluorescens (strain ATCC BAA-477 / NRRL B-23932 / Pf-5).